The chain runs to 155 residues: Large ribosomal subunit protein uL22c (155 aa).

It belongs to the universal ribosomal protein uL22 family. As to quaternary structure, part of the 50S ribosomal subunit.

The protein resides in the plastid. The protein localises to the chloroplast. Functionally, this protein binds specifically to 23S rRNA. In terms of biological role, the globular domain of the protein is located near the polypeptide exit tunnel on the outside of the subunit, while an extended beta-hairpin is found that lines the wall of the exit tunnel in the center of the 70S ribosome. This Solanum bulbocastanum (Wild potato) protein is Large ribosomal subunit protein uL22c (rpl22).